The following is a 285-amino-acid chain: Probable methyltransferase ltbC (285 aa).

The tract at residues 1–22 (MASTGQTNNYKQGYSSQTVETQ) is disordered.

It belongs to the class I-like SAM-binding methyltransferase superfamily. Monomer.

Probable methyltransferase; part of the gene cluster that mediates the biosynthesis of luteodienoside A, a glycosylated polyketide consisting of an unusual 1-O-beta-D-glucopyranosyl-myo-inositol (glucinol) ester of 3-hydroxy-2,2,4-trimethylocta-4,6-dienoic acid. The HR-PKS ltbA produces the trimethylated polyketide chain from acetyl-CoA, malonyl-CoA and S-adenosylmethionine (SAM), and the ltbA cAT domain then uses glucinol produced by the glycosyltransferase ltbB as an offloading substrate to release luteodienoside A. Since ltbA and ltbB are sufficient for the biosynthesis of luteodienoside A, the functions of the methyltransferase ltbC and the FAD-binding monooxygenase ltbD within the pathway remain obscur. This is Probable methyltransferase ltbC from Aspergillus luteorubrus.